The following is a 530-amino-acid chain: Equilibrative nucleoside transporter 4 (530 aa).

A disordered region spans residues 1–21 (MGSVGSQRLEEPSVAGTPDPG). Residues 1 to 68 (MGSVGSQRLE…DEPVPDDRYH (68 aa)) are Extracellular-facing. Residues 69–89 (AIYFAMLLAGVGFLLPYNSFI) traverse the membrane as a helical segment. At 90 to 101 (TDVDYLHHKYPG) the chain is on the cytoplasmic side. The chain crosses the membrane as a helical span at residues 102-122 (TSIVFDMSLTYILVALAAVLL). At 123–139 (NNVLVERLTLHTRITAG) the chain is on the extracellular side. A helical transmembrane segment spans residues 140-160 (YLLALGPLLFISICDVWLQLF). Residues 161–166 (SRDQAY) lie on the Cytoplasmic side of the membrane. A helical membrane pass occupies residues 167 to 187 (AINLAAVGTVAFGCTVQQSSF). Residues 188 to 231 (YGYTGMLPKRYTQGVMTGESTAGVMISLSRILTKLLLPDERAST) are Extracellular-facing. The helical transmembrane segment at 232-252 (LIFFLVSVALELLCFLLHLLV) threads the bilayer. At 253-351 (RRSRFVLFYT…LLLHRYVVAR (99 aa)) the chain is on the cytoplasmic side. A helical membrane pass occupies residues 352–372 (VIWADMLSIAVTYFITLCLFP). The Extracellular segment spans residues 373–381 (GLESEIRHC). The chain crosses the membrane as a helical span at residues 382 to 402 (ILGEWLPILIMAVFNLSDFVG). Topologically, residues 403–416 (KILAALPVDWRGTH) are cytoplasmic. Residues 417-437 (LLACSCLRVVFIPLFILCVYP) traverse the membrane as a helical segment. Residues 438–450 (SGMPALRHPAWPC) are Extracellular-facing. A helical membrane pass occupies residues 451–471 (IFSLLMGISNGYFGSVPMILA). Residues 472–486 (AGKVSPKQRELAGNT) are Cytoplasmic-facing. Residues 487 to 509 (MTVSYMSGLTLGSAVAYCTYSLT) traverse the membrane as a helical segment. The Extracellular portion of the chain corresponds to 510–530 (RDAHGSCLHASTANGSILAGL). N523 carries an N-linked (GlcNAc...) asparagine glycan.

It belongs to the SLC29A/ENT transporter (TC 2.A.57) family. Post-translationally, N-glycosylated. In terms of tissue distribution, mainly expressed in brain and skeletal muscle. In brain, expressed in cerebellum, cerebral cortex, medulla oblongata, occipital pole, frontal and temporal lobes putamen, spinal cord, substancia nigra, hippocampus, caudate nucleus, nucleus accumbens, pons and choroid plexus. Expressed in heart, in both cardiomyocytes and vascular endothelial cells. Also expressed in adrenal gland, small intestine, pancreas, kidney, liver, bone marrow, lymph node. Located in endometrial stroma, where the expression is high in the proliferative phase, decreases during the secretory phase, and is no longer detectable in the menstrual phase.

It localises to the cell membrane. The protein localises to the apical cell membrane. The catalysed reaction is serotonin(out) = serotonin(in). It carries out the reaction dopamine(out) = dopamine(in). It catalyses the reaction (R)-noradrenaline(out) = (R)-noradrenaline(in). The enzyme catalyses (R)-adrenaline(out) = (R)-adrenaline(in). The catalysed reaction is histamine(out) = histamine(in). It carries out the reaction tyramine(in) = tyramine(out). It catalyses the reaction guanidine(out) = guanidine(in). The enzyme catalyses adenosine(in) = adenosine(out). With respect to regulation, activated at acidic pH. Electrogenic voltage-dependent transporter that mediates the transport of a variety of endogenous bioactive amines, cationic xenobiotics and drugs. Utilizes the physiologic inside-negative membrane potential as a driving force to facilitate cellular uptake of organic cations. Functions as a Na(+)- and Cl(-)-independent bidirectional transporter. Substrate transport is pH-dependent and enhanced under acidic condition, which is most likely the result of allosteric changes in the transporter structure. Implicated in monoamine neurotransmitters uptake such as serotonin, dopamine, adrenaline/epinephrine, noradrenaline/norepinephrine, histamine and tyramine, thereby supporting a role in homeostatic regulation of aminergic neurotransmission in the central nervous system. Also responsible for the uptake of bioactive amines and drugs through the blood-cerebrospinal fluid (CSF) barrier, from the CSF into choroid plexus epithelial cells, thereby playing a significant role in the clearance of cationic neurotoxins, xenobiotics and metabolic waste in the brain. Involved in bidirectional transport of the purine nucleoside adenosine and plays a role in the regulation of extracellular adenosine concentrations in cardiac tissues, in particular during ischemia. May be involved in organic cation uptake from the tubular lumen into renal tubular cells, thereby contributing to organic cation reabsorption in the kidney. Also transports guanidine. The polypeptide is Equilibrative nucleoside transporter 4 (Homo sapiens (Human)).